A 270-amino-acid chain; its full sequence is FKBP-type peptidyl-prolyl cis-trans isomerase FkpA (270 aa).

The N-terminal stretch at 1 to 25 (MKSLFKVTLLATTMAVALHAPITFA) is a signal peptide. The 86-residue stretch at 164–249 (SDTVVVNYKG…VFDVELLDVK (86 aa)) folds into the PPIase FKBP-type domain.

The protein belongs to the FKBP-type PPIase family.

The protein localises to the periplasm. The enzyme catalyses [protein]-peptidylproline (omega=180) = [protein]-peptidylproline (omega=0). PPIases accelerate the folding of proteins. It catalyzes the cis-trans isomerization of proline imidic peptide bonds in oligopeptides. This is FKBP-type peptidyl-prolyl cis-trans isomerase FkpA (fkpA) from Escherichia coli (strain K12).